The sequence spans 96 residues: UPF0235 protein YggU (96 aa).

The protein belongs to the UPF0235 family.

The polypeptide is UPF0235 protein YggU (Salmonella agona (strain SL483)).